We begin with the raw amino-acid sequence, 247 residues long: 1-(5-phosphoribosyl)-5-[(5-phosphoribosylamino)methylideneamino] imidazole-4-carboxamide isomerase (247 aa).

D16 functions as the Proton acceptor in the catalytic mechanism. D135 functions as the Proton donor in the catalytic mechanism.

The protein belongs to the HisA/HisF family.

The protein localises to the cytoplasm. The catalysed reaction is 1-(5-phospho-beta-D-ribosyl)-5-[(5-phospho-beta-D-ribosylamino)methylideneamino]imidazole-4-carboxamide = 5-[(5-phospho-1-deoxy-D-ribulos-1-ylimino)methylamino]-1-(5-phospho-beta-D-ribosyl)imidazole-4-carboxamide. It participates in amino-acid biosynthesis; L-histidine biosynthesis; L-histidine from 5-phospho-alpha-D-ribose 1-diphosphate: step 4/9. The polypeptide is 1-(5-phosphoribosyl)-5-[(5-phosphoribosylamino)methylideneamino] imidazole-4-carboxamide isomerase (Paenarthrobacter aurescens (strain TC1)).